The primary structure comprises 441 residues: ATP-dependent protease ATPase subunit HslU (441 aa).

ATP-binding positions include Ile-17, 60 to 65 (GVGKTE), Asp-253, Glu-319, and Arg-391.

Belongs to the ClpX chaperone family. HslU subfamily. As to quaternary structure, a double ring-shaped homohexamer of HslV is capped on each side by a ring-shaped HslU homohexamer. The assembly of the HslU/HslV complex is dependent on binding of ATP.

Its subcellular location is the cytoplasm. In terms of biological role, ATPase subunit of a proteasome-like degradation complex; this subunit has chaperone activity. The binding of ATP and its subsequent hydrolysis by HslU are essential for unfolding of protein substrates subsequently hydrolyzed by HslV. HslU recognizes the N-terminal part of its protein substrates and unfolds these before they are guided to HslV for hydrolysis. The sequence is that of ATP-dependent protease ATPase subunit HslU from Legionella pneumophila (strain Paris).